Reading from the N-terminus, the 160-residue chain is uncharacterized protein (160 aa).

Residues 137 to 157 (YNILFVVVILLLLFVAWRCYV) form a helical membrane-spanning segment.

The protein localises to the host membrane. Its subcellular location is the virion. This is an uncharacterized protein from Acanthamoeba polyphaga mimivirus (APMV).